The primary structure comprises 337 residues: Ketol-acid reductoisomerase (NADP(+)) (337 aa).

Residues Val3–Thr183 enclose the KARI N-terminal Rossmann domain. Residues Tyr26–Gln29, Lys49, Ser52, Ser54, and Asp84–Gln87 each bind NADP(+). His109 is an active-site residue. Gly135 lines the NADP(+) pocket. A KARI C-terminal knotted domain is found at Thr184–Val329. 4 residues coordinate Mg(2+): Asp192, Glu196, Glu228, and Glu232. A substrate-binding site is contributed by Ser253.

This sequence belongs to the ketol-acid reductoisomerase family. Mg(2+) serves as cofactor.

It catalyses the reaction (2R)-2,3-dihydroxy-3-methylbutanoate + NADP(+) = (2S)-2-acetolactate + NADPH + H(+). The enzyme catalyses (2R,3R)-2,3-dihydroxy-3-methylpentanoate + NADP(+) = (S)-2-ethyl-2-hydroxy-3-oxobutanoate + NADPH + H(+). Its pathway is amino-acid biosynthesis; L-isoleucine biosynthesis; L-isoleucine from 2-oxobutanoate: step 2/4. It participates in amino-acid biosynthesis; L-valine biosynthesis; L-valine from pyruvate: step 2/4. Involved in the biosynthesis of branched-chain amino acids (BCAA). Catalyzes an alkyl-migration followed by a ketol-acid reduction of (S)-2-acetolactate (S2AL) to yield (R)-2,3-dihydroxy-isovalerate. In the isomerase reaction, S2AL is rearranged via a Mg-dependent methyl migration to produce 3-hydroxy-3-methyl-2-ketobutyrate (HMKB). In the reductase reaction, this 2-ketoacid undergoes a metal-dependent reduction by NADPH to yield (R)-2,3-dihydroxy-isovalerate. The sequence is that of Ketol-acid reductoisomerase (NADP(+)) from Rhodococcus jostii (strain RHA1).